Here is a 799-residue protein sequence, read N- to C-terminus: MTEVKTGRVVDDAPVNDAPENNAAEATSPARHDAIPEEARQRAAQLRADLERHNRLYYELDTPEISDAEYDALYRELVGLETRWPALRDEASPTQRVGGEVLEGLEKQAHTLRMYSLDNAFSRDEWGAFIQRMYNALPDAPSAFWCDPKMDGLALEVIYENGVFTSALTRGNGEVGEVVTAAMRTVRNLPLALRGDDVPRRIEVRGEVVIAKADFEQLNARQSAAGGKLFANPRNAAAGSVRQLDTTVTAGRPLQFLAYGVGQVVLEGGTAPWTTHSGLMARLREWGFDTPPEGRLCASPDEVWAYYEALGARRESLAIEIDGVVAKLDDTEAQEALGFTARAPRWALALKFPAMQARTRLDDIRVQVGRTGVLTPVAILEPVRVGGVEVSRATLHNEDEIRAKGLMLGDMVLVQRAGDVIPEVVRPLVEERTGDERPFVFPENCPECDSPVVRPQGEVAHRCVNVMCPAVRRQSIIHFVSKAGLDVRGVGERWVQQLVDGGHVTSPVGLFLLTKLDLMRFERMGPTSAANFVTALDAARTGATLVRLICALGIRHVGEQTARTLAANFTDLDALREADAETLQQLPDIGPEVAGSIRSFFANEGNLELLERLRAIGLWPKRQDAPPASEGADAIVLPLQGLKVLFTGSLTRVGRTEAEDMARAAGANIASSVTKSLDLLVVGGKPGSKLEKARKLGIRVMEEADFFAMLASGVASVDASEAVAEETPPSQEAAGAEDAPSQGAAHVRTASDETGSASGDDSRGAAAENDPARPARGGAMSTAEGEDVPRGRAEQLKLF.

Residues Met1–Asp11 show a composition bias toward basic and acidic residues. The interval Met1–Ile35 is disordered. Residues Asp67 to Asp71, Ser116 to Leu117, and Asp147 contribute to the NAD(+) site. Lys149 serves as the catalytic N6-AMP-lysine intermediate. Arg170, Glu207, Lys327, and Lys351 together coordinate NAD(+). Zn(2+)-binding residues include Cys445, Cys448, Cys463, and Cys468. The BRCT domain maps to Ala634 to Val723. Residues Ser720 to Phe799 form a disordered region. A compositionally biased stretch (low complexity) spans Gly755–Ala767. Basic and acidic residues predominate over residues Asp787–Phe799.

Belongs to the NAD-dependent DNA ligase family. LigA subfamily. Mg(2+) is required as a cofactor. Mn(2+) serves as cofactor.

The enzyme catalyses NAD(+) + (deoxyribonucleotide)n-3'-hydroxyl + 5'-phospho-(deoxyribonucleotide)m = (deoxyribonucleotide)n+m + AMP + beta-nicotinamide D-nucleotide.. In terms of biological role, DNA ligase that catalyzes the formation of phosphodiester linkages between 5'-phosphoryl and 3'-hydroxyl groups in double-stranded DNA using NAD as a coenzyme and as the energy source for the reaction. It is essential for DNA replication and repair of damaged DNA. The protein is DNA ligase of Nitratidesulfovibrio vulgaris (strain ATCC 29579 / DSM 644 / CCUG 34227 / NCIMB 8303 / VKM B-1760 / Hildenborough) (Desulfovibrio vulgaris).